The following is a 570-amino-acid chain: Sorting nexin-41 (570 aa).

2 disordered regions span residues Met1–Ser31 and Phe81–Ser115. Residues Gly84 to Asp101 are compositionally biased toward polar residues. Residues Asn98–Ser236 enclose the PX domain. Arg153, Ser155, Lys179, and Arg202 together coordinate a 1,2-diacyl-sn-glycero-3-phospho-(1D-myo-inositol-3-phosphate). Positions Asp429–Thr498 are disordered. A compositionally biased stretch (polar residues) spans Thr440 to Gln454. A compositionally biased stretch (low complexity) spans Pro455 to Ser464.

It belongs to the sorting nexin family.

Its subcellular location is the endosome membrane. It is found in the endomembrane system. May be required for cytoplasm to vacuole transport (Cvt) and pexophagy. The sequence is that of Sorting nexin-41 (SNX41) from Yarrowia lipolytica (strain CLIB 122 / E 150) (Yeast).